A 281-amino-acid polypeptide reads, in one-letter code: Putative outer membrane protein BBA52 (281 aa).

Residues 162–281 form a disordered region; sequence KRISDNQSKL…FFDSLEDQFI (120 aa). Residues 179–196 show a composition bias toward polar residues; it reads NKSVGSKFSKNSRPSKSP. Over residues 219–249 the composition is skewed to acidic residues; sequence EFLDDPSQESDELEREYQDDELESEDPDDGE. The segment covering 250–262 has biased composition (basic and acidic residues); it reads REYQDDRESRDDT. Residues 263–281 show a composition bias toward acidic residues; the sequence is FNEDQSEDEFFDSLEDQFI.

It localises to the cell outer membrane. The chain is Putative outer membrane protein BBA52 from Borreliella burgdorferi (strain ATCC 35210 / DSM 4680 / CIP 102532 / B31) (Borrelia burgdorferi).